The sequence spans 875 residues: Probable serine/threonine-protein kinase samkC (875 aa).

Over residues 1-12 (METTTITSILDD) the composition is skewed to polar residues. The disordered stretch occupies residues 1–47 (METTTITSILDDNNNNNNNNNNNNNNNNNNNNNNNNNNNNNNNNNYN). Over residues 13–45 (NNNNNNNNNNNNNNNNNNNNNNNNNNNNNNNNN) the composition is skewed to low complexity. An SAM domain is found at 51-116 (WDNEMVCKWL…SEFDDLKNIF (66 aa)). Positions 135–162 (DNNNLNNLNNNNNNNNNNNNNNNNNNNN) form a coiled coil. Low complexity predominate over residues 136–168 (NNNLNNLNNNNNNNNNNNNNNNNNNNNNNNNNN). A disordered region spans residues 136–170 (NNNLNNLNNNNNNNNNNNNNNNNNNNNNNNNNNKT). The 272-residue stretch at 181 to 452 (YVFIKQMKGS…SKQLLNFSWF (272 aa)) folds into the Protein kinase domain. ATP-binding positions include 187 to 195 (MKGSVNCSL) and Lys-210. Asp-301 (proton acceptor) is an active-site residue. Disordered stretches follow at residues 331–362 (NNND…NDTN) and 461–718 (SEPQ…NNNN). Residues 474–554 (PQTSQSKPKP…KPKPSSSLSS (81 aa)) show a composition bias toward low complexity. Residues 555–564 (EPPPLEPQPK) are compositionally biased toward pro residues. 3 stretches are compositionally biased toward low complexity: residues 565 to 581 (PQTS…LSSS), 589 to 611 (QPTQ…SQPT), and 617 to 653 (QPKS…QQQK). A coiled-coil region spans residues 626 to 655 (QSKQQQQQQQQQQQQQQQQQQQQQQQQKSK). Over residues 654 to 663 (SKPEQSKSKP) the composition is skewed to basic and acidic residues. Positions 664 to 718 (EQSQSKPQPGQPLQSPSKPQPIPSTTKTTTTTTTTTTPNNNNNNNNNNNNNNNNN) are enriched in low complexity. The chain crosses the membrane as a helical span at residues 842–862 (TLILYTFYYFLSNTLIYQIIL).

Belongs to the protein kinase superfamily. Ser/Thr protein kinase family.

The protein resides in the membrane. It catalyses the reaction L-seryl-[protein] + ATP = O-phospho-L-seryl-[protein] + ADP + H(+). The catalysed reaction is L-threonyl-[protein] + ATP = O-phospho-L-threonyl-[protein] + ADP + H(+). This is Probable serine/threonine-protein kinase samkC (samkC) from Dictyostelium discoideum (Social amoeba).